A 355-amino-acid polypeptide reads, in one-letter code: Uroporphyrinogen decarboxylase (355 aa).

Residues 27–31, Asp-77, Tyr-154, Thr-209, and His-327 contribute to the substrate site; that span reads RQAGR.

The protein belongs to the uroporphyrinogen decarboxylase family. Homodimer.

The protein resides in the cytoplasm. The catalysed reaction is uroporphyrinogen III + 4 H(+) = coproporphyrinogen III + 4 CO2. The protein operates within porphyrin-containing compound metabolism; protoporphyrin-IX biosynthesis; coproporphyrinogen-III from 5-aminolevulinate: step 4/4. Functionally, catalyzes the decarboxylation of four acetate groups of uroporphyrinogen-III to yield coproporphyrinogen-III. The protein is Uroporphyrinogen decarboxylase of Yersinia pseudotuberculosis serotype O:1b (strain IP 31758).